The sequence spans 83 residues: Small ribosomal subunit protein bS18 (83 aa).

Belongs to the bacterial ribosomal protein bS18 family. Part of the 30S ribosomal subunit. Forms a tight heterodimer with protein bS6.

In terms of biological role, binds as a heterodimer with protein bS6 to the central domain of the 16S rRNA, where it helps stabilize the platform of the 30S subunit. In Tropheryma whipplei (strain TW08/27) (Whipple's bacillus), this protein is Small ribosomal subunit protein bS18.